A 240-amino-acid chain; its full sequence is Probable transcriptional regulatory protein Adeh_2184 (240 aa).

Belongs to the TACO1 family.

It is found in the cytoplasm. The chain is Probable transcriptional regulatory protein Adeh_2184 from Anaeromyxobacter dehalogenans (strain 2CP-C).